A 632-amino-acid polypeptide reads, in one-letter code: tRNA uridine 5-carboxymethylaminomethyl modification enzyme MnmG (632 aa).

FAD contacts are provided by residues 15-20, Ile127, and Ser182; that span reads GAGHAG. NAD(+) is bound at residue 276–290; the sequence is GPRYCPSIEDKIVRF. FAD is bound at residue Gln373.

The protein belongs to the MnmG family. As to quaternary structure, homodimer. Heterotetramer of two MnmE and two MnmG subunits. Requires FAD as cofactor.

It localises to the cytoplasm. Functionally, NAD-binding protein involved in the addition of a carboxymethylaminomethyl (cmnm) group at the wobble position (U34) of certain tRNAs, forming tRNA-cmnm(5)s(2)U34. This chain is tRNA uridine 5-carboxymethylaminomethyl modification enzyme MnmG, found in Streptococcus pyogenes serotype M18 (strain MGAS8232).